We begin with the raw amino-acid sequence, 230 residues long: MAAKVENGSNIRKIDVKTPDGKVDGTIELPAELFDAPANIALMHQVVTAQRAAARQGTHSTKTRGDVSGGGRKPYRQKGTGRARQGSMRAPQFTGGGIVHGPKLRDYSQRTPKKMIAAALRGALSDRARNGRIHAVTELVVGKTPSTKSAKEFLGTLTDRKQVLVVIGRSDETGAKSVRNLPGVHLLSPDQLNTYDVLRADDLVFSVEALNSYIAAQQAAGTSTPEKVSA.

A disordered region spans residues R51–R105.

Belongs to the universal ribosomal protein uL4 family. Part of the 50S ribosomal subunit.

Its function is as follows. One of the primary rRNA binding proteins, this protein initially binds near the 5'-end of the 23S rRNA. It is important during the early stages of 50S assembly. It makes multiple contacts with different domains of the 23S rRNA in the assembled 50S subunit and ribosome. In terms of biological role, forms part of the polypeptide exit tunnel. The protein is Large ribosomal subunit protein uL4 of Mycobacterium leprae (strain Br4923).